Reading from the N-terminus, the 120-residue chain is NAD(P)H-quinone oxidoreductase subunit 3 (120 aa).

A run of 3 helical transmembrane segments spans residues 10–30 (FLGF…TNLI), 64–84 (MFAL…PWAV), and 89–109 (LGLL…IALA).

It belongs to the complex I subunit 3 family. In terms of assembly, NDH-1 can be composed of about 15 different subunits; different subcomplexes with different compositions have been identified which probably have different functions.

The protein resides in the cellular thylakoid membrane. It carries out the reaction a plastoquinone + NADH + (n+1) H(+)(in) = a plastoquinol + NAD(+) + n H(+)(out). It catalyses the reaction a plastoquinone + NADPH + (n+1) H(+)(in) = a plastoquinol + NADP(+) + n H(+)(out). In terms of biological role, NDH-1 shuttles electrons from an unknown electron donor, via FMN and iron-sulfur (Fe-S) centers, to quinones in the respiratory and/or the photosynthetic chain. The immediate electron acceptor for the enzyme in this species is believed to be plastoquinone. Couples the redox reaction to proton translocation, and thus conserves the redox energy in a proton gradient. Cyanobacterial NDH-1 also plays a role in inorganic carbon-concentration. The chain is NAD(P)H-quinone oxidoreductase subunit 3 from Prochlorococcus marinus (strain MIT 9312).